Here is a 110-residue protein sequence, read N- to C-terminus: UPF0122 protein BcerKBAB4_3669 (110 aa).

Belongs to the UPF0122 family.

In terms of biological role, might take part in the signal recognition particle (SRP) pathway. This is inferred from the conservation of its genetic proximity to ftsY/ffh. May be a regulatory protein. This Bacillus mycoides (strain KBAB4) (Bacillus weihenstephanensis) protein is UPF0122 protein BcerKBAB4_3669.